We begin with the raw amino-acid sequence, 134 residues long: Profilin-2 (134 aa).

Cys-13 and Cys-118 are joined by a disulfide. Residues 84 to 100 (AVTRGKKGTGGITIKKT) carry the Involved in PIP2 interaction motif. Position 114 is a phosphothreonine (Thr-114).

It belongs to the profilin family. In terms of assembly, occurs in many kinds of cells as a complex with monomeric actin in a 1:1 ratio. Post-translationally, phosphorylated by MAP kinases.

Its subcellular location is the cytoplasm. The protein resides in the cytoskeleton. In terms of biological role, binds to actin and affects the structure of the cytoskeleton. At high concentrations, profilin prevents the polymerization of actin, whereas it enhances it at low concentrations. This chain is Profilin-2, found in Olea europaea (Common olive).